The sequence spans 1648 residues: Histone transcription regulator 3 (1648 aa).

2 disordered regions span residues 301–371 and 1597–1630; these read NTPS…EQEN and DVNDENNPALPSSGSVTSKSTPDPTSKPSAIKKR. Thr-302 is modified (phosphothreonine). Ser-304 is modified (phosphoserine). Residues 339–353 are compositionally biased toward basic and acidic residues; sequence EEARPNKRTDEHIDS. Positions 1597 to 1610 are enriched in polar residues; sequence DVNDENNPALPSSG. The segment covering 1611–1625 has biased composition (low complexity); that stretch reads SVTSKSTPDPTSKPS.

It belongs to the HIR3 family. In terms of assembly, component of the HIR complex, composed of HIR1, HIR2, HIR3 and HPC2. This complex may consist of one copy of HIR1 and HIR3 and two copies of HIR2 and HPC2. The HIR complex interacts with ASF1. Interacts with RTT106.

Its subcellular location is the nucleus. It localises to the chromosome. In terms of biological role, HIR1, HIR2 and HIR3 are repressors of histone gene transcription. They are required for the periodic repression of three of the four histone gene loci during cell cycle as well as for autogenous regulation of the HTA1-HTB1 locus by H2A and H2B. Also has a role in nucleosome assembly. The protein is Histone transcription regulator 3 (HIR3) of Saccharomyces cerevisiae (strain ATCC 204508 / S288c) (Baker's yeast).